Reading from the N-terminus, the 541-residue chain is Peptide chain release factor 3 (541 aa).

The tr-type G domain occupies 14 to 283 (EARRNFAIIS…AFLDYALKPG (270 aa)). Residues 23–30 (SHPDAGKT), 91–95 (DTPGH), and 145–148 (NKLD) contribute to the GTP site.

Belongs to the TRAFAC class translation factor GTPase superfamily. Classic translation factor GTPase family. PrfC subfamily.

It is found in the cytoplasm. Functionally, increases the formation of ribosomal termination complexes and stimulates activities of RF-1 and RF-2. It binds guanine nucleotides and has strong preference for UGA stop codons. It may interact directly with the ribosome. The stimulation of RF-1 and RF-2 is significantly reduced by GTP and GDP, but not by GMP. The sequence is that of Peptide chain release factor 3 from Acaryochloris marina (strain MBIC 11017).